The following is a 411-amino-acid chain: Ribose-phosphate pyrophosphokinase 3, chloroplastic (411 aa).

The transit peptide at 1 to 39 (MAAISPANATTAASLSLPQFSSTSSSLSSSSSPSFLNFK) directs the protein to the chloroplast. Residues Asp231 and His233 each contribute to the Mg(2+) site. The binding of phosphoribosylpyrophosphate stretch occupies residues 314 to 329 (GRHVVIVDDLVQSGGT).

It belongs to the ribose-phosphate pyrophosphokinase family.

It is found in the plastid. Its subcellular location is the chloroplast. The catalysed reaction is D-ribose 5-phosphate + ATP = 5-phospho-alpha-D-ribose 1-diphosphate + AMP + H(+). This Arabidopsis thaliana (Mouse-ear cress) protein is Ribose-phosphate pyrophosphokinase 3, chloroplastic (PRS3).